The primary structure comprises 206 residues: Large ribosomal subunit protein uL4 (206 aa).

The disordered stretch occupies residues 49 to 76; it reads QSAKTRTEVRGGGIKPWRQKGTGRARQG.

This sequence belongs to the universal ribosomal protein uL4 family. As to quaternary structure, part of the 50S ribosomal subunit.

Its function is as follows. One of the primary rRNA binding proteins, this protein initially binds near the 5'-end of the 23S rRNA. It is important during the early stages of 50S assembly. It makes multiple contacts with different domains of the 23S rRNA in the assembled 50S subunit and ribosome. In terms of biological role, forms part of the polypeptide exit tunnel. This chain is Large ribosomal subunit protein uL4, found in Clostridium botulinum (strain Alaska E43 / Type E3).